A 625-amino-acid chain; its full sequence is Putative xanthine/uracil permease C887.17 (625 aa).

Helical transmembrane passes span A49–V69, A107–M127, E154–L174, A192–I212, M246–Y263, F328–Y348, V369–V389, G406–F426, I429–T449, and I465–I485. The disordered stretch occupies residues E595–I625.

This sequence belongs to the nucleobase:cation symporter-2 (NCS2) (TC 2.A.40) family. Azg-like subfamily.

It is found in the golgi apparatus membrane. The protein is Putative xanthine/uracil permease C887.17 of Schizosaccharomyces pombe (strain 972 / ATCC 24843) (Fission yeast).